The sequence spans 283 residues: NAD kinase (283 aa).

The Proton acceptor role is filled by Asp68. Residues 68–69 (DG), Arg73, 142–143 (ND), Arg153, Arg170, Asp172, and 183–188 (TAYSLS) each bind NAD(+).

It belongs to the NAD kinase family. A divalent metal cation serves as cofactor.

Its subcellular location is the cytoplasm. It catalyses the reaction NAD(+) + ATP = ADP + NADP(+) + H(+). In terms of biological role, involved in the regulation of the intracellular balance of NAD and NADP, and is a key enzyme in the biosynthesis of NADP. Catalyzes specifically the phosphorylation on 2'-hydroxyl of the adenosine moiety of NAD to yield NADP. The polypeptide is NAD kinase (Symbiobacterium thermophilum (strain DSM 24528 / JCM 14929 / IAM 14863 / T)).